Reading from the N-terminus, the 203-residue chain is Guanylate kinase (203 aa).

The Guanylate kinase-like domain occupies 3–181 (GTLYIVSAPS…ALDDLKAIFR (179 aa)). 10 to 17 (APSGAGKT) is a binding site for ATP.

The protein belongs to the guanylate kinase family.

Its subcellular location is the cytoplasm. The catalysed reaction is GMP + ATP = GDP + ADP. In terms of biological role, essential for recycling GMP and indirectly, cGMP. This is Guanylate kinase (gmk) from Pseudomonas aeruginosa (strain ATCC 15692 / DSM 22644 / CIP 104116 / JCM 14847 / LMG 12228 / 1C / PRS 101 / PAO1).